A 547-amino-acid polypeptide reads, in one-letter code: ATP synthase subunit alpha (547 aa).

An ATP-binding site is contributed by 172–179 (GDRKTGKT).

The protein belongs to the ATPase alpha/beta chains family. In terms of assembly, F-type ATPases have 2 components, CF(1) - the catalytic core - and CF(0) - the membrane proton channel. CF(1) has five subunits: alpha(3), beta(3), gamma(1), delta(1), epsilon(1). CF(0) has three main subunits: a(1), b(2) and c(9-12). The alpha and beta chains form an alternating ring which encloses part of the gamma chain. CF(1) is attached to CF(0) by a central stalk formed by the gamma and epsilon chains, while a peripheral stalk is formed by the delta and b chains.

Its subcellular location is the cell membrane. The catalysed reaction is ATP + H2O + 4 H(+)(in) = ADP + phosphate + 5 H(+)(out). In terms of biological role, produces ATP from ADP in the presence of a proton gradient across the membrane. The alpha chain is a regulatory subunit. The sequence is that of ATP synthase subunit alpha from Rhodococcus erythropolis (strain PR4 / NBRC 100887).